A 317-amino-acid chain; its full sequence is Transaldolase (317 aa).

Lys-132 functions as the Schiff-base intermediate with substrate in the catalytic mechanism.

The protein belongs to the transaldolase family. Type 1 subfamily. Homodimer.

It is found in the cytoplasm. It catalyses the reaction D-sedoheptulose 7-phosphate + D-glyceraldehyde 3-phosphate = D-erythrose 4-phosphate + beta-D-fructose 6-phosphate. The protein operates within carbohydrate degradation; pentose phosphate pathway; D-glyceraldehyde 3-phosphate and beta-D-fructose 6-phosphate from D-ribose 5-phosphate and D-xylulose 5-phosphate (non-oxidative stage): step 2/3. Transaldolase is important for the balance of metabolites in the pentose-phosphate pathway. The sequence is that of Transaldolase from Haemophilus influenzae (strain 86-028NP).